A 407-amino-acid polypeptide reads, in one-letter code: [Pyruvate dehydrogenase (acetyl-transferring)] kinase isozyme 2, mitochondrial (407 aa).

Residues L135–S364 form the Histidine kinase domain. 2 positions are modified to phosphotyrosine: Y215 and Y216. ATP contacts are provided by residues E251–R258, D290, S309–T310, and G325–L330. Position 376 is an N6-succinyllysine (K376).

Belongs to the PDK/BCKDK protein kinase family. As to quaternary structure, homodimer, and heterodimer with PDK1. Interacts with the pyruvate dehydrogenase complex subunit DLAT, and is part of the multimeric pyruvate dehydrogenase complex that contains multiple copies of pyruvate dehydrogenase (E1), dihydrolipoamide acetyltransferase (DLAT, E2) and lipoamide dehydrogenase (DLD, E3). In terms of tissue distribution, detected in heart (at protein level). Highest level of expression in heart and skeletal muscle and the lowest in spleen and lung. Liver, kidney, brain and testis levels are intermediate.

The protein resides in the mitochondrion matrix. The catalysed reaction is L-seryl-[pyruvate dehydrogenase E1 alpha subunit] + ATP = O-phospho-L-seryl-[pyruvate dehydrogenase E1 alpha subunit] + ADP + H(+). Its activity is regulated as follows. Activity increases in response to increased acetyl-CoA and NADH levels and upon binding to the pyruvate dehydrogenase subunit DLAT. Inhibited by ADP and pyruvate; these compounds interfere with DLAT binding and thereby inhibit kinase activity. Inhibited by dichloroacetate. Inhibited by AZD7545; this compound interferes with DLAT binding and thereby inhibits kinase activity. Reactive oxygen species cause the formation of disulfide bonds, and thereby inhibit the enzyme. Kinase that plays a key role in the regulation of glucose and fatty acid metabolism and homeostasis via phosphorylation of the pyruvate dehydrogenase subunits PDHA1 and PDHA2. This inhibits pyruvate dehydrogenase activity, and thereby regulates metabolite flux through the tricarboxylic acid cycle, down-regulates aerobic respiration and inhibits the formation of acetyl-coenzyme A from pyruvate. Inhibition of pyruvate dehydrogenase decreases glucose utilization and increases fat metabolism. Mediates cellular responses to insulin. Plays an important role in maintaining normal blood glucose levels and in metabolic adaptation to nutrient availability. Via its regulation of pyruvate dehydrogenase activity, plays an important role in maintaining normal blood pH and in preventing the accumulation of ketone bodies under starvation. Plays a role in the regulation of cell proliferation and in resistance to apoptosis under oxidative stress. Plays a role in p53/TP53-mediated apoptosis. This Rattus norvegicus (Rat) protein is [Pyruvate dehydrogenase (acetyl-transferring)] kinase isozyme 2, mitochondrial (Pdk2).